A 227-amino-acid chain; its full sequence is Uracil phosphoribosyltransferase (227 aa).

36-40 (KGLVK) contributes to the GTP binding site. 5-phospho-alpha-D-ribose 1-diphosphate is bound by residues R86, R111, and 145–153 (DPMLATGST). Uracil is bound by residues I212 and 217-219 (GDA). D218 contributes to the 5-phospho-alpha-D-ribose 1-diphosphate binding site.

It belongs to the UPRTase family. Mg(2+) is required as a cofactor.

It catalyses the reaction UMP + diphosphate = 5-phospho-alpha-D-ribose 1-diphosphate + uracil. It participates in pyrimidine metabolism; UMP biosynthesis via salvage pathway; UMP from uracil: step 1/1. Allosterically activated by GTP. Its function is as follows. Catalyzes the conversion of uracil and 5-phospho-alpha-D-ribose 1-diphosphate (PRPP) to UMP and diphosphate. The protein is Uracil phosphoribosyltransferase of Halobacterium salinarum (strain ATCC 700922 / JCM 11081 / NRC-1) (Halobacterium halobium).